The following is a 71-amino-acid chain: Beta-defensin 124 (71 aa).

The N-terminal stretch at 1–22 is a signal peptide; the sequence is MTQLLLFLVALLVLGHVPSGRS. 3 cysteine pairs are disulfide-bonded: cysteine 27/cysteine 54, cysteine 34/cysteine 48, and cysteine 38/cysteine 55.

Belongs to the beta-defensin family.

The protein localises to the secreted. In terms of biological role, has antibacterial activity. The chain is Beta-defensin 124 (DEFB124) from Homo sapiens (Human).